Consider the following 147-residue polypeptide: Transcriptional regulator MraZ (147 aa).

2 SpoVT-AbrB domains span residues 5-47 (QQLR…SEKE) and 76-123 (TFEI…SKSK).

It belongs to the MraZ family. As to quaternary structure, forms oligomers.

It is found in the cytoplasm. The protein localises to the nucleoid. The sequence is that of Transcriptional regulator MraZ from Mycoplasmopsis synoviae (strain 53) (Mycoplasma synoviae).